The sequence spans 353 residues: Rhodopsin (353 aa).

The Extracellular segment spans residues Met1–Ala36. Residues Asn2 and Asn15 are each glycosylated (N-linked (GlcNAc...) asparagine). A helical membrane pass occupies residues Tyr37–Val61. Residues Thr62–Asn73 lie on the Cytoplasmic side of the membrane. The helical transmembrane segment at Tyr74 to Tyr96 threads the bilayer. Residues Thr97–Cys110 are Extracellular-facing. Cys110 and Cys187 are oxidised to a cystine. A helical transmembrane segment spans residues Asn111–Ile133. The short motif at Glu134 to Trp136 is the 'Ionic lock' involved in activated form stabilization element. Residues Glu134–His152 lie on the Cytoplasmic side of the membrane. A helical transmembrane segment spans residues Ala153–Val173. At Gly174 to Ser202 the chain is on the extracellular side. N-linked (GlcNAc...) asparagine glycosylation is present at Asn200. Residues Phe203–Gly224 form a helical membrane-spanning segment. Over Arg225 to Arg252 the chain is Cytoplasmic. A helical membrane pass occupies residues Met253–Trp274. At Ile275–Val286 the chain is on the extracellular side. A helical membrane pass occupies residues Phe287–Cys308. Residue Lys296 is modified to N6-(retinylidene)lysine. The Cytoplasmic segment spans residues Leu309–Ala353. S-palmitoyl cysteine attachment occurs at residues Cys322 and Cys323. The segment at Glu331–Ala353 is disordered. Residues Ala334 to Ala353 are compositionally biased toward low complexity.

Belongs to the G-protein coupled receptor 1 family. Opsin subfamily. In terms of processing, phosphorylated on some or all of the serine and threonine residues present in the C-terminal region. Post-translationally, contains one covalently linked retinal chromophore.

The protein localises to the membrane. It localises to the cell projection. Its subcellular location is the cilium. The protein resides in the photoreceptor outer segment. Its function is as follows. Photoreceptor required for image-forming vision at low light intensity. While most salt water fish species use retinal as chromophore, most freshwater fish use 3-dehydroretinal, or a mixture of retinal and 3-dehydroretinal. Light-induced isomerization of 11-cis to all-trans retinal triggers a conformational change that activates signaling via G-proteins. Subsequent receptor phosphorylation mediates displacement of the bound G-protein alpha subunit by arrestin and terminates signaling. The protein is Rhodopsin (rho) of Sarpa salpa (Salema).